The following is a 96-amino-acid chain: UPF0235 protein Acid345_4205 (96 aa).

The protein belongs to the UPF0235 family.

This chain is UPF0235 protein Acid345_4205, found in Koribacter versatilis (strain Ellin345).